The sequence spans 374 residues: Dihydrolipoyllysine-residue acetyltransferase component of acetoin cleaving system (374 aa).

One can recognise a Lipoyl-binding domain in the interval 9–84; the sequence is IIPIVMPKWG…PVKALLGVLA (76 aa). Lys-50 carries the post-translational modification N6-lipoyllysine. The AB hydrolase-1 domain maps to 137–360; that stretch reads TVLFIHGFGG…DAGHMSQMEK (224 aa).

It depends on (R)-lipoate as a cofactor.

The enzyme catalyses N(6)-[(R)-dihydrolipoyl]-L-lysyl-[protein] + acetyl-CoA = N(6)-[(R)-S(8)-acetyldihydrolipoyl]-L-lysyl-[protein] + CoA. Its pathway is ketone degradation; acetoin degradation. Dihydrolipoamide acetyltransferase involved in acetoin catabolism. The polypeptide is Dihydrolipoyllysine-residue acetyltransferase component of acetoin cleaving system (acoC) (Cupriavidus necator (strain ATCC 17699 / DSM 428 / KCTC 22496 / NCIMB 10442 / H16 / Stanier 337) (Ralstonia eutropha)).